Consider the following 392-residue polypeptide: Tryptophan 2,3-dioxygenase (392 aa).

Substrate-binding positions include 57-61 (FIVTH) and Arg-128. Position 313 (His-313) interacts with heme. Thr-328 is a substrate binding site.

The protein belongs to the tryptophan 2,3-dioxygenase family. Homotetramer. Dimer of dimers. Requires heme as cofactor.

It carries out the reaction L-tryptophan + O2 = N-formyl-L-kynurenine. The protein operates within amino-acid degradation; L-tryptophan degradation via kynurenine pathway; L-kynurenine from L-tryptophan: step 1/2. It functions in the pathway pigment biosynthesis; ommochrome biosynthesis. In terms of biological role, heme-dependent dioxygenase that catalyzes the oxidative cleavage of the L-tryptophan (L-Trp) pyrrole ring and converts L-tryptophan to N-formyl-L-kynurenine. Catalyzes the oxidative cleavage of the indole moiety. In Anopheles gambiae (African malaria mosquito), this protein is Tryptophan 2,3-dioxygenase.